Here is a 444-residue protein sequence, read N- to C-terminus: Tol-Pal system protein TolB (444 aa).

Positions 1–26 (MNLFRSLAPMGLALALLLPAAAPALA) are cleaved as a signal peptide. The span at 287–310 (ASGTRRQLTNSPSIETAPSYSPDG) shows a compositional bias: polar residues. Residues 287 to 311 (ASGTRRQLTNSPSIETAPSYSPDGS) are disordered.

This sequence belongs to the TolB family. In terms of assembly, the Tol-Pal system is composed of five core proteins: the inner membrane proteins TolA, TolQ and TolR, the periplasmic protein TolB and the outer membrane protein Pal. They form a network linking the inner and outer membranes and the peptidoglycan layer.

It is found in the periplasm. Part of the Tol-Pal system, which plays a role in outer membrane invagination during cell division and is important for maintaining outer membrane integrity. The protein is Tol-Pal system protein TolB of Cereibacter sphaeroides (strain ATCC 17025 / ATH 2.4.3) (Rhodobacter sphaeroides).